A 238-amino-acid chain; its full sequence is MTPVENVDLSEVKKFEDLAHRWWDAESEFKPLHEINPLRLDFIDERAALPGKRVLDVGCGGGILSESMARRGAHVVGIDMGEAPLSVARLHGLESGVSVDYRRTTIEELAEAEAESFDVVTCMEMLEHVPDPASVIAACARVAKPGADLFFSTINRNPKSFLFAIVGAEYVLKMLPRGTHEWKKFIKPSELAAWLRSADLDLCEMRGMTYNPLLKEYKLGDDVDVNYLMHAVKPLKDA.

S-adenosyl-L-methionine contacts are provided by arginine 39, glycine 58, aspartate 79, and methionine 123.

This sequence belongs to the methyltransferase superfamily. UbiG/COQ3 family.

The enzyme catalyses a 3-demethylubiquinol + S-adenosyl-L-methionine = a ubiquinol + S-adenosyl-L-homocysteine + H(+). The catalysed reaction is a 3-(all-trans-polyprenyl)benzene-1,2-diol + S-adenosyl-L-methionine = a 2-methoxy-6-(all-trans-polyprenyl)phenol + S-adenosyl-L-homocysteine + H(+). The protein operates within cofactor biosynthesis; ubiquinone biosynthesis. In terms of biological role, O-methyltransferase that catalyzes the 2 O-methylation steps in the ubiquinone biosynthetic pathway. The protein is Ubiquinone biosynthesis O-methyltransferase of Hahella chejuensis (strain KCTC 2396).